The following is a 369-amino-acid chain: uncharacterized protein (369 aa).

Lysine 184 is subject to N6-(pyridoxal phosphate)lysine.

It belongs to the class-V pyridoxal-phosphate-dependent aminotransferase family. Requires pyridoxal 5'-phosphate as cofactor.

This is an uncharacterized protein from Helicobacter pylori (strain J99 / ATCC 700824) (Campylobacter pylori J99).